The following is a 674-amino-acid chain: tRNA-guanine(15) transglycosylase (674 aa).

D90 functions as the Nucleophile in the catalytic mechanism. Substrate is bound by residues D125 and A192. Zn(2+)-binding residues include C275, C277, and C280. Positions 596 to 671 constitute a PUA domain; that stretch reads HNRVVVSEDS…QAIKTRKWKK (76 aa).

The protein belongs to the archaeosine tRNA-ribosyltransferase family. Zn(2+) is required as a cofactor.

It catalyses the reaction guanosine(15) in tRNA + 7-cyano-7-deazaguanine = 7-cyano-7-carbaguanosine(15) in tRNA + guanine. The protein operates within tRNA modification; archaeosine-tRNA biosynthesis. In terms of biological role, exchanges the guanine residue with 7-cyano-7-deazaguanine (preQ0) at position 15 in the dihydrouridine loop (D-loop) of archaeal tRNAs. This chain is tRNA-guanine(15) transglycosylase, found in Methanosphaera stadtmanae (strain ATCC 43021 / DSM 3091 / JCM 11832 / MCB-3).